A 1069-amino-acid chain; its full sequence is Receptor-type guanylate cyclase gcy-29 (1069 aa).

Residues 1 to 23 form the signal peptide; that stretch reads MLPNFWNFQFIFVIFCWIPIVVS. Residues 24–458 lie on the Extracellular side of the membrane; the sequence is DEKIVLKIGS…FREENCDYTQ (435 aa). N-linked (GlcNAc...) asparagine glycosylation is found at Asn-161, Asn-240, and Asn-407. Residues 459-479 form a helical membrane-spanning segment; sequence TIVIATAVVCIILTVFLGIWL. Over 480–1069 the chain is Cytoplasmic; the sequence is RRACETSALD…FKKKNNTFDF (590 aa). Residues 497–806 enclose the Protein kinase domain; that stretch reads RDDVQILDEE…RVRLATEIAL (310 aa). ATP is bound by residues 503 to 511 and Lys-527; that span reads LDEEQVKSV. One can recognise a Guanylate cyclase domain in the interval 876 to 1006; sequence TVMFSDIVGF…ETVNIAAVME (131 aa). Residues Asp-881, Ile-882, and Asp-925 each contribute to the Mg(2+) site.

It belongs to the adenylyl cyclase class-4/guanylyl cyclase family. As to expression, expressed bilaterally in ASE and AFD sensory neurons.

The protein localises to the cell membrane. It catalyses the reaction GTP = 3',5'-cyclic GMP + diphosphate. In terms of biological role, guanylate cyclase involved in the production of the second messenger cGMP. The protein is Receptor-type guanylate cyclase gcy-29 of Caenorhabditis elegans.